The primary structure comprises 137 residues: ATP synthase epsilon chain (137 aa).

This sequence belongs to the ATPase epsilon chain family. In terms of assembly, F-type ATPases have 2 components, CF(1) - the catalytic core - and CF(0) - the membrane proton channel. CF(1) has five subunits: alpha(3), beta(3), gamma(1), delta(1), epsilon(1). CF(0) has three main subunits: a, b and c.

It is found in the cell membrane. Functionally, produces ATP from ADP in the presence of a proton gradient across the membrane. The protein is ATP synthase epsilon chain of Syntrophomonas wolfei subsp. wolfei (strain DSM 2245B / Goettingen).